The sequence spans 157 residues: Ribosome maturation factor RimP (157 aa).

The protein belongs to the RimP family.

It localises to the cytoplasm. In terms of biological role, required for maturation of 30S ribosomal subunits. The polypeptide is Ribosome maturation factor RimP (Ligilactobacillus salivarius (strain UCC118) (Lactobacillus salivarius)).